Reading from the N-terminus, the 536-residue chain is Chaperonin GroEL (536 aa).

ATP contacts are provided by residues 29–32 (TLGP), 86–90 (DGTTT), glycine 413, 476–478 (DAA), and aspartate 492.

It belongs to the chaperonin (HSP60) family. In terms of assembly, forms a cylinder of 14 subunits composed of two heptameric rings stacked back-to-back. Interacts with the co-chaperonin GroES.

The protein resides in the cytoplasm. The catalysed reaction is ATP + H2O + a folded polypeptide = ADP + phosphate + an unfolded polypeptide.. Together with its co-chaperonin GroES, plays an essential role in assisting protein folding. The GroEL-GroES system forms a nano-cage that allows encapsulation of the non-native substrate proteins and provides a physical environment optimized to promote and accelerate protein folding. This chain is Chaperonin GroEL, found in Methanococcus vannielii (strain ATCC 35089 / DSM 1224 / JCM 13029 / OCM 148 / SB).